A 749-amino-acid polypeptide reads, in one-letter code: 5-methyltetrahydropteroyltriglutamate--homocysteine methyltransferase (749 aa).

Residues 15-18 (RELK) and Lys114 each bind 5-methyltetrahydropteroyltri-L-glutamate. L-homocysteine-binding positions include 425–427 (IGS) and Glu478. Residues 425-427 (IGS) and Glu478 each bind L-methionine. Trp555 contributes to the 5-methyltetrahydropteroyltri-L-glutamate binding site. L-homocysteine is bound at residue Asp593. L-methionine is bound at residue Asp593. Residue Glu599 coordinates 5-methyltetrahydropteroyltri-L-glutamate. Zn(2+) is bound by residues His636, Cys638, and Glu660. His689 (proton donor) is an active-site residue. Position 721 (Cys721) interacts with Zn(2+).

Belongs to the vitamin-B12 independent methionine synthase family. It depends on Zn(2+) as a cofactor.

It catalyses the reaction 5-methyltetrahydropteroyltri-L-glutamate + L-homocysteine = tetrahydropteroyltri-L-glutamate + L-methionine. Its pathway is amino-acid biosynthesis; L-methionine biosynthesis via de novo pathway; L-methionine from L-homocysteine (MetE route): step 1/1. Functionally, catalyzes the transfer of a methyl group from 5-methyltetrahydrofolate to homocysteine resulting in methionine formation. The protein is 5-methyltetrahydropteroyltriglutamate--homocysteine methyltransferase of Streptococcus thermophilus (strain ATCC BAA-491 / LMD-9).